The sequence spans 341 residues: Cyclin-Y (341 aa).

Gly2 carries the N-myristoyl glycine lipid modification. Phosphoserine is present on residues Ser21 and Ser25. The residue at position 30 (Thr30) is a Phosphothreonine. Ser33 is subject to Phosphoserine. The residue at position 37 (Thr37) is a Phosphothreonine. Thr67 is modified (phosphothreonine; by CDK14). Phosphoserine; by CDK14 is present on residues Ser71 and Ser73. The residue at position 75 (Thr75) is a Phosphothreonine. Phosphoserine; by CDK14 is present on Ser83. Ser99, Ser100, and Ser102 each carry phosphoserine. A Cyclin N-terminal domain is found at 143–265; that stretch reads DIFDENLHPL…FLELLQFNIN (123 aa). Phosphoserine is present on Ser280. Ser288 and Ser295 each carry phosphoserine; by CDK14. Phosphoserine occurs at positions 324 and 326. Position 331 is a phosphothreonine (Thr331).

Belongs to the cyclin family. Cyclin Y subfamily. In terms of assembly, found in a complex with CAPRIN2, LRP6 and CDK14 during G2/M stage; CAPRIN2 functions as a scaffold for the complex by binding to CCNY via its N terminus and to CDK14 via its C terminus. Interacts with CDK14. Interacts with CDK16. Interacts with LRP6. In terms of processing, ubiquitinated; leading to its degradation. Heavily phosphorylated. Phosphorylation at Ser-71 and Ser-73 by CDK14 is enhanced during the G2 and M cell cycle phases, and creates a phosphodegron triggering SCF-dependent ubiquitination. In terms of tissue distribution, widely expressed.

It localises to the cell membrane. It is found in the nucleus. In terms of biological role, positive regulatory subunit of the cyclin-dependent kinases CDK14/PFTK1 and CDK16. Acts as a cell-cycle regulator of Wnt signaling pathway during G2/M phase by recruiting CDK14/PFTK1 to the plasma membrane and promoting phosphorylation of LRP6, leading to the activation of the Wnt signaling pathway. Recruits CDK16 to the plasma membrane. Isoform 3 might play a role in the activation of MYC-mediated transcription. The sequence is that of Cyclin-Y (CCNY) from Homo sapiens (Human).